Consider the following 645-residue polypeptide: ATP-dependent zinc metalloprotease FtsH (645 aa).

The Cytoplasmic segment spans residues 1–8 (MDFNREHK). A helical transmembrane segment spans residues 9-29 (INFLYVLAAMVGVLLIQSLVS). The Periplasmic segment spans residues 30 to 105 (QPDHIRTIPY…FSGEPEPGPW (76 aa)). Residues 106 to 126 (PTILGWLMPIVGFALVWMFLI) traverse the membrane as a helical segment. The Cytoplasmic portion of the chain corresponds to 127–645 (RPMSMGPGMD…ALTVEGGEAQ (519 aa)). 199–206 (GPPGTGKT) serves as a coordination point for ATP. Residue histidine 423 coordinates Zn(2+). Residue glutamate 424 is part of the active site. Zn(2+) is bound by residues histidine 427 and aspartate 500. The segment at 612-645 (SASVLRDGGDGAADAGQDRSGEHRALTVEGGEAQ) is disordered. Positions 627 to 637 (GQDRSGEHRAL) are enriched in basic and acidic residues.

The protein in the central section; belongs to the AAA ATPase family. It in the C-terminal section; belongs to the peptidase M41 family. In terms of assembly, homohexamer. It depends on Zn(2+) as a cofactor.

Its subcellular location is the cell inner membrane. Its function is as follows. Acts as a processive, ATP-dependent zinc metallopeptidase for both cytoplasmic and membrane proteins. Plays a role in the quality control of integral membrane proteins. The polypeptide is ATP-dependent zinc metalloprotease FtsH (Paraburkholderia phymatum (strain DSM 17167 / CIP 108236 / LMG 21445 / STM815) (Burkholderia phymatum)).